The sequence spans 1255 residues: Membrane-associated guanylate kinase, WW and PDZ domain-containing protein 1 (1255 aa).

The 89-residue stretch at 17-105 (ECTVKRGPQG…AVTFKAVRQG (89 aa)) folds into the PDZ 1 domain. The Guanylate kinase-like domain maps to 96–287 (AVTFKAVRQG…APITDPSQKF (192 aa)). 103 to 110 (RQGGRLNK) contacts ATP. 2 disordered regions span residues 208–227 (HSLQ…SYND) and 235–265 (HTEN…TLQE). A WW 1 domain is found at 300 to 333 (GPLPENWEMAYTENGEVYFIDHNAKTTSWLDPRC). Ser357 carries the post-translational modification Phosphoserine. One can recognise a WW 2 domain in the interval 359–392 (LELPAGWEKIEDPVYGVYYVDHINRKTQYENPVL). The segment at 395–462 (KRKRQLEQQQ…QGKPFFTRNP (68 aa)) is disordered. Over residues 402 to 414 (QQQQQQQHQQQPQ) the composition is skewed to low complexity. Over residues 434 to 444 (PVAPSHPPSNP) the composition is skewed to pro residues. A PDZ 2 domain is found at 471–553 (HTKLRKSSRG…GASVDLELCR (83 aa)). The span at 585–601 (QETYDSPASHSSKTGKV) shows a compositional bias: polar residues. 2 disordered regions span residues 585 to 622 (QETY…SSHG) and 719 to 820 (QRGG…GERD). In terms of domain architecture, PDZ 3 spans 642–720 (TVHIVKGPMG…GSEVTLLVQR (79 aa)). Phosphoserine is present on residues Ser729 and Ser740. The segment covering 741–755 (QNSSQHSVSSLRSLH) has biased composition (low complexity). Position 799 is a phosphoserine (Ser799). The PDZ 4 domain maps to 840–922 (DIFLWRKETG…QGHVNLTVRR (83 aa)). A disordered region spans residues 932-984 (ENEVPSPASSHHSSNQPASLTEEKRTPQGSQNSLNTVSSGSGSTSGIGSGGGG). Polar residues-rich tracts occupy residues 938–950 (PASS…QPAS) and 958–967 (PQGSQNSLNT). Residues 974-984 (STSGIGSGGGG) are compositionally biased toward gly residues. Positions 997–1093 (DVEIRRGENE…TVTLRIIPGD (97 aa)) constitute a PDZ 5 domain. Residue Ser1070 is modified to Phosphoserine. Polar residues predominate over residues 1111–1129 (TTTHAPSQQGTQETRTTTK). The segment at 1111 to 1142 (TTTHAPSQQGTQETRTTTKPKPDSQFEFKGPQ) is disordered. Positions 1151–1233 (TVELERGAKG…RVRLFLRRGD (83 aa)) constitute a PDZ 6 domain.

As to quaternary structure, part of a complex composed of AMOTL2, MAGI1 and CDH5, within the complex AMOTL2 acts as a scaffold protein for the interaction of MAGI1 with CDH5. The complex is required for coupling actin fibers to cell junctions in endothelial cells. Interacts through its WW 2 domain with SYNPO and through its PDZ 5 domain with ACTN4. Interacts with cytoplasmic domain of ADGRB1. Interacts via its WW domains with DRPLA. Interacts with ESAM, LRP2 and CXADR. May interact with CTNNB1. Interacts through its PDZ 1 domain with NET1. Interacts with ASIC3 and AMOT. Interacts with FCHSD2. Interacts with IGSF5/JAM4 and through its PDZ 2 and 3 domains with NPHS1 forming a tripartite complex. Interacts with DDN. May interact (via PDZ domain) with RAPGEF2. Interacts with DLL1. Interacts with KCNJ10 and possibly with KCNJ10/KCNJ16 heterodimer; this interaction may facilitate KCNJ10/KCNJ16 potassium channel expression at the basolateral membrane in kidney tubular cells. Interacts with PRRG4 (via cytoplasmic domain).

It is found in the cell junction. It localises to the tight junction. The protein resides in the cytoplasm. Its subcellular location is the membrane. Its function is as follows. Plays a role in coupling actin fibers to cell junctions in endothelial cells, via its interaction with AMOTL2 and CDH5. May regulate acid-induced ASIC3 currents by modulating its expression at the cell surface. The sequence is that of Membrane-associated guanylate kinase, WW and PDZ domain-containing protein 1 (Magi1) from Rattus norvegicus (Rat).